The primary structure comprises 273 residues: Vacuolar membrane protein YPL162C (273 aa).

Residues Met1 to Leu13 are Vacuolar-facing. Residues Gly14–Val34 form a helical membrane-spanning segment. At Lys35 to Asp51 the chain is on the cytoplasmic side. The chain crosses the membrane as a helical span at residues Ile52–Leu72. The Vacuolar portion of the chain corresponds to Lys73 to Phe97. A helical transmembrane segment spans residues Leu98–Ile118. Over Glu119–Gln156 the chain is Cytoplasmic. Residues Leu157–Tyr177 form a helical membrane-spanning segment. At Leu178–Asn198 the chain is on the vacuolar side. The helical transmembrane segment at Phe199–Cys219 threads the bilayer. Residues Val220–Ile273 lie on the Cytoplasmic side of the membrane.

It localises to the vacuole membrane. The chain is Vacuolar membrane protein YPL162C from Saccharomyces cerevisiae (strain ATCC 204508 / S288c) (Baker's yeast).